The chain runs to 381 residues: G-protein coupled receptor homolog Q2/3L (381 aa).

Topologically, residues 1 to 91 are extracellular; that stretch reads MNYTLSTVSS…HCDDGVDTTS (91 aa). N-linked (GlcNAc...) asparagine; by host glycosylation is found at Asn2, Asn15, Asn19, Asn41, Asn50, Asn56, and Asn62. Residues 92–112 form a helical membrane-spanning segment; it reads FGLITLYSTIFFLGLFGNIIV. The Cytoplasmic portion of the chain corresponds to 113 to 126; that stretch reads LTVLRKYKIKTIQD. A helical membrane pass occupies residues 127-147; the sequence is MFLLNLTLSDLIFVLVFPFNL. Topologically, residues 148–165 are extracellular; sequence YDSIAKQWSLGDCLCKFK. The chain crosses the membrane as a helical span at residues 166–186; it reads AMFYFVGFYNSMSFITLMSID. The Cytoplasmic segment spans residues 187–206; that stretch reads RYLAVVHPVKSMPIRTKRYG. Residues 207-227 form a helical membrane-spanning segment; that stretch reads IVLSMVVWIVSTIESFPIMLF. The Extracellular segment spans residues 228 to 251; sequence YETKKVYGITYCHVFYNDNAKIWK. The helical transmembrane segment at 252–272 threads the bilayer; the sequence is LFINFEINIFGMIIPLTILLY. The Cytoplasmic segment spans residues 273–294; the sequence is CYYKILNTLKTSQTKNKKAIKM. Residues 295 to 315 form a helical membrane-spanning segment; that stretch reads VFLIVICSVLFLLPFSVTVFV. The Extracellular segment spans residues 316–336; the sequence is SSLYLLNVFSGCMALRFVNLA. Residues 337 to 357 traverse the membrane as a helical segment; sequence VHVAEIVSLCHCFINPLIYAF. Over 358 to 381 the chain is Cytoplasmic; the sequence is CSREFTKKLLRLRTTSSAGSISIG.

Belongs to the G-protein coupled receptor 1 family.

The protein resides in the host cell membrane. Functionally, putative chemokine receptor. This chain is G-protein coupled receptor homolog Q2/3L, found in Ovis aries (Sheep).